The chain runs to 260 residues: 5'-nucleotidase SurE (260 aa).

A divalent metal cation is bound by residues aspartate 8, aspartate 9, serine 43, and asparagine 96.

This sequence belongs to the SurE nucleotidase family. A divalent metal cation serves as cofactor.

It localises to the cytoplasm. It carries out the reaction a ribonucleoside 5'-phosphate + H2O = a ribonucleoside + phosphate. Functionally, nucleotidase that shows phosphatase activity on nucleoside 5'-monophosphates. This Ruegeria sp. (strain TM1040) (Silicibacter sp.) protein is 5'-nucleotidase SurE.